The primary structure comprises 380 residues: Magnesium-protoporphyrin IX monomethyl ester [oxidative] cyclase 1 (380 aa).

The protein belongs to the AcsF family. Fe cation serves as cofactor.

The enzyme catalyses Mg-protoporphyrin IX 13-monomethyl ester + 3 NADPH + 3 O2 + 2 H(+) = 3,8-divinyl protochlorophyllide a + 3 NADP(+) + 5 H2O. It participates in porphyrin-containing compound metabolism; chlorophyll biosynthesis (light-independent). In terms of biological role, catalyzes the formation of the isocyclic ring in chlorophyll biosynthesis. Mediates the cyclase reaction, which results in the formation of divinylprotochlorophyllide (Pchlide) characteristic of all chlorophylls from magnesium-protoporphyrin IX 13-monomethyl ester (MgPMME). The polypeptide is Magnesium-protoporphyrin IX monomethyl ester [oxidative] cyclase 1 (Thermosynechococcus vestitus (strain NIES-2133 / IAM M-273 / BP-1)).